We begin with the raw amino-acid sequence, 894 residues long: Disease resistance protein SUMM2 (894 aa).

Residues 31 to 71 (ELSKNVVAMKKDMEVLKKKRDDVKRRVDIEEFTRRRERLSQ) adopt a coiled-coil conformation. The 304-residue stretch at 140–443 (TLATPIARIE…CEGFIDENES (304 aa)) folds into the NB-ARC domain. ATP is bound at residue 183 to 190 (GMGGVGKT). 7 LRR repeats span residues 517-538 (SVRR…PECL), 539-561 (ELTT…FFRC), 564-586 (MLVV…ISKL), 588-610 (SLRY…QELK), 611-633 (KLRY…SNIS), 634-656 (SLRK…EELQ), and 660-681 (HLEV…LNAP).

It belongs to the disease resistance NB-LRR family. Interacts with PAT1.

Negatively regulated by the MEKK1-MKK1-MKK2-MPK4 kinase cascade. Disease resistance protein that mediates defense responses against the bacterial pathogen Pseudomonas syringae pv tomato strain DC3000, and the virulent oomycete Hyaloperonospora arabidopsidis isolate Noco2. Becomes active when the MEKK1-MKK1-MKK2-MPK4 kinase cascade is disrupted by the microbial effector hopAI1. Does not seem to be required for the activation of MPK4 by flg22, or flg22-induced up-regulation of PAD3. Functions downstream of MEKK2/SUMM1 in immune responses, including cell death and defense responses. The protein is Disease resistance protein SUMM2 of Arabidopsis thaliana (Mouse-ear cress).